A 156-amino-acid chain; its full sequence is Small ribosomal subunit protein uS7 (156 aa).

The protein belongs to the universal ribosomal protein uS7 family. In terms of assembly, part of the 30S ribosomal subunit. Contacts proteins S9 and S11.

One of the primary rRNA binding proteins, it binds directly to 16S rRNA where it nucleates assembly of the head domain of the 30S subunit. Is located at the subunit interface close to the decoding center, probably blocks exit of the E-site tRNA. The protein is Small ribosomal subunit protein uS7 of Bartonella tribocorum (strain CIP 105476 / IBS 506).